A 188-amino-acid chain; its full sequence is dCTP deaminase (188 aa).

DCTP-binding positions include K111–R116, T135–E137, Q156, Y170, and Q180. E137 functions as the Proton donor/acceptor in the catalytic mechanism.

It belongs to the dCTP deaminase family. In terms of assembly, homotrimer.

It catalyses the reaction dCTP + H2O + H(+) = dUTP + NH4(+). It functions in the pathway pyrimidine metabolism; dUMP biosynthesis; dUMP from dCTP (dUTP route): step 1/2. Catalyzes the deamination of dCTP to dUTP. This chain is dCTP deaminase, found in Cupriavidus necator (strain ATCC 17699 / DSM 428 / KCTC 22496 / NCIMB 10442 / H16 / Stanier 337) (Ralstonia eutropha).